We begin with the raw amino-acid sequence, 253 residues long: Testis-expressed protein 47 (253 aa).

Testis-specific.

The chain is Testis-expressed protein 47 from Homo sapiens (Human).